The primary structure comprises 367 residues: Peptide chain release factor 1 (367 aa).

Q238 carries the post-translational modification N5-methylglutamine.

Belongs to the prokaryotic/mitochondrial release factor family. In terms of processing, methylated by PrmC. Methylation increases the termination efficiency of RF1.

The protein localises to the cytoplasm. Peptide chain release factor 1 directs the termination of translation in response to the peptide chain termination codons UAG and UAA. The polypeptide is Peptide chain release factor 1 (Dictyoglomus turgidum (strain DSM 6724 / Z-1310)).